Consider the following 508-residue polypeptide: Histidine ammonia-lyase (508 aa).

Residues 143–145 constitute a cross-link (5-imidazolinone (Ala-Gly)); it reads ASG. Ser144 is subject to 2,3-didehydroalanine (Ser).

This sequence belongs to the PAL/histidase family. Post-translationally, contains an active site 4-methylidene-imidazol-5-one (MIO), which is formed autocatalytically by cyclization and dehydration of residues Ala-Ser-Gly.

It is found in the cytoplasm. It carries out the reaction L-histidine = trans-urocanate + NH4(+). The protein operates within amino-acid degradation; L-histidine degradation into L-glutamate; N-formimidoyl-L-glutamate from L-histidine: step 1/3. In Anaeromyxobacter sp. (strain K), this protein is Histidine ammonia-lyase.